A 72-amino-acid polypeptide reads, in one-letter code: Translation initiation factor IF-1 (72 aa).

One can recognise an S1-like domain in the interval 1–72; it reads MAKEDNIEMQ…TKGRIVFRAR (72 aa).

The protein belongs to the IF-1 family. In terms of assembly, component of the 30S ribosomal translation pre-initiation complex which assembles on the 30S ribosome in the order IF-2 and IF-3, IF-1 and N-formylmethionyl-tRNA(fMet); mRNA recruitment can occur at any time during PIC assembly.

Its subcellular location is the cytoplasm. One of the essential components for the initiation of protein synthesis. Stabilizes the binding of IF-2 and IF-3 on the 30S subunit to which N-formylmethionyl-tRNA(fMet) subsequently binds. Helps modulate mRNA selection, yielding the 30S pre-initiation complex (PIC). Upon addition of the 50S ribosomal subunit IF-1, IF-2 and IF-3 are released leaving the mature 70S translation initiation complex. The chain is Translation initiation factor IF-1 from Shewanella baltica (strain OS155 / ATCC BAA-1091).